The chain runs to 183 residues: Der GTPase-activating protein YihI (183 aa).

The tract at residues 1–101 (MSRSKKTRKG…KLTDEQKLLK (101 aa)) is disordered. 2 stretches are compositionally biased toward basic and acidic residues: residues 22-46 (KKQD…RHNE) and 92-101 (KLTDEQKLLK).

It belongs to the YihI family. As to quaternary structure, interacts with Der.

In terms of biological role, a GTPase-activating protein (GAP) that modifies Der/EngA GTPase function. May play a role in ribosome biogenesis. This Shewanella oneidensis (strain ATCC 700550 / JCM 31522 / CIP 106686 / LMG 19005 / NCIMB 14063 / MR-1) protein is Der GTPase-activating protein YihI.